The sequence spans 263 residues: Proteasome subunit alpha type-1 (263 aa).

Residue Met1 is modified to N-acetylmethionine. Phosphoserine; alternate is present on Ser110. Residue Ser110 is glycosylated (O-linked (GlcNAc) serine; alternate). Lys115 is covalently cross-linked (Glycyl lysine isopeptide (Lys-Gly) (interchain with G-Cter in ubiquitin)). Position 177 is a phosphoserine (Ser177). Residue Lys208 forms a Glycyl lysine isopeptide (Lys-Gly) (interchain with G-Cter in ubiquitin) linkage. The segment at 232–263 is disordered; the sequence is FLDGLEERPQRKAQPSQAADEPAEKADEPMEH. Over residues 253 to 263 the composition is skewed to basic and acidic residues; the sequence is PAEKADEPMEH.

The protein belongs to the peptidase T1A family. In terms of assembly, the 26S proteasome consists of a 20S proteasome core and two 19S regulatory subunits. The 20S proteasome core is a barrel-shaped complex made of 28 subunits that are arranged in four stacked rings. The two outer rings are each formed by seven alpha subunits, and the two inner rings are formed by seven beta subunits. The proteolytic activity is exerted by three beta-subunits PSMB5, PSMB6 and PSMB7. Interacts with NOTCH3. Interacts with ZFAND1. Proteolytically cleaved from a C-terminal extension in the course of the conversion of the proteasome from its latent form into its active form. In terms of tissue distribution, ubiquitous.

The protein resides in the cytoplasm. It is found in the nucleus. In terms of biological role, component of the 20S core proteasome complex involved in the proteolytic degradation of most intracellular proteins. This complex plays numerous essential roles within the cell by associating with different regulatory particles. Associated with two 19S regulatory particles, forms the 26S proteasome and thus participates in the ATP-dependent degradation of ubiquitinated proteins. The 26S proteasome plays a key role in the maintenance of protein homeostasis by removing misfolded or damaged proteins that could impair cellular functions, and by removing proteins whose functions are no longer required. Associated with the PA200 or PA28, the 20S proteasome mediates ubiquitin-independent protein degradation. This type of proteolysis is required in several pathways including spermatogenesis (20S-PA200 complex) or generation of a subset of MHC class I-presented antigenic peptides (20S-PA28 complex). The polypeptide is Proteasome subunit alpha type-1 (Psma1) (Rattus norvegicus (Rat)).